The primary structure comprises 310 residues: Beta sliding clamp (310 aa).

Belongs to the beta sliding clamp family. In terms of assembly, forms a ring-shaped head-to-tail homodimer around DNA which binds and tethers DNA polymerases and other proteins to the DNA. The DNA replisome complex has a single clamp-loading complex (3 tau and 1 each of delta, delta', psi and chi subunits) which binds 3 Pol III cores (1 core on the leading strand and 2 on the lagging strand) each with a beta sliding clamp dimer. Additional proteins in the replisome are other copies of gamma, psi and chi, Ssb, DNA helicase and RNA primase.

The protein localises to the cytoplasm. Its function is as follows. Confers DNA tethering and processivity to DNA polymerases and other proteins. Acts as a clamp, forming a ring around DNA (a reaction catalyzed by the clamp-loading complex) which diffuses in an ATP-independent manner freely and bidirectionally along dsDNA. Initially characterized for its ability to contact the catalytic subunit of DNA polymerase III (Pol III), a complex, multichain enzyme responsible for most of the replicative synthesis in bacteria; Pol III exhibits 3'-5' exonuclease proofreading activity. The beta chain is required for initiation of replication as well as for processivity of DNA replication. The protein is Beta sliding clamp (dnaN) of Micrococcus luteus (Micrococcus lysodeikticus).